Consider the following 246-residue polypeptide: Sugar fermentation stimulation protein homolog (246 aa).

It belongs to the SfsA family.

This is Sugar fermentation stimulation protein homolog from Prochlorococcus marinus (strain MIT 9312).